The primary structure comprises 865 residues: Serine/threonine-protein kinase greatwall (865 aa).

An N-acetylmethionine modification is found at Met1. The Protein kinase domain occupies Phe34–Phe821. ATP is bound by residues Ile40 to Val48 and Lys61. Asp155 (proton acceptor) is an active-site residue. Phosphothreonine occurs at positions 206 and 221. Ser362 and Ser442 each carry phosphoserine. The residue at position 508 (Thr508) is a Phosphothreonine. Phosphoserine occurs at positions 545, 619, 644, and 655. A Phosphothreonine modification is found at Thr708. Ser711 bears the Phosphoserine mark. Thr727 carries the phosphothreonine; by CDK1 modification. The AGC-kinase C-terminal domain occupies Ser822–Leu865. Phosphoserine is present on residues Ser861 and Ser864.

It belongs to the protein kinase superfamily. AGC Ser/Thr protein kinase family. Phosphorylation at Thr-727 by CDK1 during M phase activates its kinase activity. Maximum phosphorylation occurs in prometaphase.

The protein localises to the cytoplasm. Its subcellular location is the cytoskeleton. It is found in the microtubule organizing center. It localises to the centrosome. The protein resides in the nucleus. The catalysed reaction is L-seryl-[protein] + ATP = O-phospho-L-seryl-[protein] + ADP + H(+). It catalyses the reaction L-threonyl-[protein] + ATP = O-phospho-L-threonyl-[protein] + ADP + H(+). Functionally, serine/threonine kinase that plays a key role in M phase by acting as a regulator of mitosis entry and maintenance. Acts by promoting the inactivation of protein phosphatase 2A (PP2A) during M phase: does not directly inhibit PP2A but acts by mediating phosphorylation and subsequent activation of ARPP19 and ENSA at 'Ser-62' and 'Ser-67', respectively. ARPP19 and ENSA are phosphatase inhibitors that specifically inhibit the PPP2R2D (PR55-delta) subunit of PP2A. Inactivation of PP2A during M phase is essential to keep cyclin-B1-CDK1 activity high. Following DNA damage, it is also involved in checkpoint recovery by being inhibited. In Mus musculus (Mouse), this protein is Serine/threonine-protein kinase greatwall (Mastl).